Consider the following 210-residue polypeptide: Cytochrome c biogenesis ATP-binding export protein CcmA (210 aa).

One can recognise an ABC transporter domain in the interval 3-205 (LHLQAAGLAC…KPSGYRELNL (203 aa)). 37 to 44 (GPNGSGKT) lines the ATP pocket.

It belongs to the ABC transporter superfamily. CcmA exporter (TC 3.A.1.107) family. The complex is composed of two ATP-binding proteins (CcmA) and two transmembrane proteins (CcmB).

It localises to the cell inner membrane. The catalysed reaction is heme b(in) + ATP + H2O = heme b(out) + ADP + phosphate + H(+). In terms of biological role, part of the ABC transporter complex CcmAB involved in the biogenesis of c-type cytochromes; once thought to export heme, this seems not to be the case, but its exact role is uncertain. Responsible for energy coupling to the transport system. This Pseudomonas putida (strain GB-1) protein is Cytochrome c biogenesis ATP-binding export protein CcmA.